A 375-amino-acid chain; its full sequence is tRNA-specific 2-thiouridylase MnmA (375 aa).

ATP is bound by residues 12–19 (GMSGGVDS) and Met-38. Positions 98–100 (NPD) are interaction with target base in tRNA. Cys-103 acts as the Nucleophile in catalysis. Cys-103 and Cys-200 form a disulfide bridge. Gly-127 serves as a coordination point for ATP. Residues 150–152 (KDQ) are interaction with tRNA. Cys-200 functions as the Cysteine persulfide intermediate in the catalytic mechanism. The interval 312-313 (RY) is interaction with tRNA.

This sequence belongs to the MnmA/TRMU family.

It is found in the cytoplasm. The catalysed reaction is S-sulfanyl-L-cysteinyl-[protein] + uridine(34) in tRNA + AH2 + ATP = 2-thiouridine(34) in tRNA + L-cysteinyl-[protein] + A + AMP + diphosphate + H(+). Its function is as follows. Catalyzes the 2-thiolation of uridine at the wobble position (U34) of tRNA, leading to the formation of s(2)U34. In Ligilactobacillus salivarius (strain UCC118) (Lactobacillus salivarius), this protein is tRNA-specific 2-thiouridylase MnmA.